Reading from the N-terminus, the 314-residue chain is N-alpha-acetyltransferase 80 (314 aa).

One can recognise an N-acetyltransferase domain in the interval 90 to 243 (LEPVHCRPEL…TTVLRAFSKP (154 aa)). Residues Arg-113 and 118–121 (RLHS) contribute to the substrate site. Residues 169–171 (VVV), 177–182 (GRGFGR), and Gln-207 each bind acetyl-CoA. The disordered stretch occupies residues 260–295 (VPRSSKGPPLPPPPPLPQSLTASPPPSPEPLPQSPL). Pro residues predominate over residues 267–292 (PPLPPPPPLPQSLTASPPPSPEPLPQ).

The protein belongs to the acetyltransferase family.

It localises to the cytoplasm. Its subcellular location is the cytosol. It carries out the reaction N-terminal L-aspartyl-L-aspartyl-L-aspartyl-[protein] + acetyl-CoA = N-terminal N-acetyl-L-aspartyl-L-aspartyl-L-aspartyl-[protein] + CoA + H(+). The enzyme catalyses N-terminal L-glutamyl-L-glutamyl-L-glutamyl-[protein] + acetyl-CoA = N-terminal N-acetyl-L-glutamyl-L-glutamyl-L-glutamyl-[protein] + CoA + H(+). Functionally, N-alpha-acetyltransferase that specifically mediates the acetylation of the acidic amino terminus of processed forms of beta- and gamma-actin (ACTB and ACTG, respectively). N-terminal acetylation of processed beta- and gamma-actin regulates actin filament depolymerization and elongation. In vivo, preferentially displays N-terminal acetyltransferase activity towards acid N-terminal sequences starting with Asp-Asp-Asp and Glu-Glu-Glu. In vitro, shows high activity towards Met-Asp-Glu-Leu and Met-Asp-Asp-Asp. May act as a tumor suppressor. This chain is N-alpha-acetyltransferase 80, found in Mus musculus (Mouse).